The sequence spans 81 residues: Mu/omega-theraphotoxin-Hs1a (81 aa).

Residues 1-21 (MRASMFLALAGLVLLFVVCYA) form the signal peptide. Residues 22-48 (SESEEKEFPRELLFKFFAVDDFKGEER) constitute a propeptide that is removed on maturation. 3 disulfide bridges follow: Cys50/Cys65, Cys57/Cys70, and Cys64/Cys77.

Belongs to the neurotoxin 10 (Hwtx-1) family. 23 (HwTx-I) subfamily. In terms of tissue distribution, expressed by the venom gland.

It is found in the secreted. Functionally, lethal toxin with multiple biological activities. Inhibits voltage-gated TTX-sensitive sodium channels in DRG neurons (IC(50)=55 nM) and also shows activity when directly tested on Nav1.7/SCN9A (IC(50)=25.1-630 nM). Inhibits N-type calcium channels (Cav2.2/CACNA1B (IC(50)=100 nM)). Also blocks neuromuscular transmission. In vivo, intrathecal injected toxin shows analgesic activity in the rat formalin-induced pain model, without induction of motor dysfunction in rats. The chain is Mu/omega-theraphotoxin-Hs1a from Cyriopagopus schmidti (Chinese bird spider).